Reading from the N-terminus, the 247-residue chain is Terpene cyclase ausL (247 aa).

Transmembrane regions (helical) follow at residues 49–69 (AIAV…AWIY), 75–95 (HWQG…AATL), 114–134 (LVLL…CLAL), 138–158 (GALG…SGAV), 171–191 (SLVI…KLCI), and 206–226 (PMCW…PVLY).

This sequence belongs to the paxB family.

It is found in the membrane. The protein operates within secondary metabolite biosynthesis; terpenoid biosynthesis. Functionally, terpene cyclase; part of the gene cluster that mediates the biosynthesis of calidodehydroaustin, a fungal meroterpenoid. The first step of the pathway is the synthesis of 3,5-dimethylorsellinic acid by the polyketide synthase ausA. 3,5-dimethylorsellinic acid is then prenylated by the polyprenyl transferase ausN. Further epoxidation by the FAD-dependent monooxygenase ausM and cyclization by the probable terpene cyclase ausL lead to the formation of protoaustinoid A. Protoaustinoid A is then oxidized to spiro-lactone preaustinoid A3 by the combined action of the FAD-binding monooxygenases ausB and ausC, and the dioxygenase ausE. Acid-catalyzed keto-rearrangement and ring contraction of the tetraketide portion of preaustinoid A3 by ausJ lead to the formation of preaustinoid A4. The aldo-keto reductase ausK, with the help of ausH, is involved in the next step by transforming preaustinoid A4 into isoaustinone which is in turn hydroxylated by the P450 monooxygenase ausI to form austinolide. The cytochrome P450 monooxygenase ausG modifies austinolide to austinol. Austinol is further acetylated to austin by the O-acetyltransferase ausP, which spontaneously changes to dehydroaustin. The cytochrome P450 monooxygenase ausR then converts dehydroaustin is into 7-dehydrodehydroaustin. The hydroxylation catalyzed by ausR permits the O-acetyltransferase ausQ to add an additional acetyl group to the molecule, leading to the formation of acetoxydehydroaustin. The short chain dehydrogenase ausT catalyzes the reduction of the double bond present between carbon atoms 1 and 2 to convert 7-dehydrodehydroaustin into 1,2-dihydro-7-hydroxydehydroaustin. AusQ catalyzes not only an acetylation reaction but also the addition of the PKS ausV diketide product to 1,2-dihydro-7-hydroxydehydroaustin, forming precalidodehydroaustin. Finally, the iron/alpha-ketoglutarate-dependent dioxygenase converts precalidodehydroaustin into calidodehydroaustin. The protein is Terpene cyclase ausL of Aspergillus calidoustus.